The chain runs to 548 residues: 5-aminolevulinate synthase, mitochondrial (548 aa).

A mitochondrion-targeting transit peptide spans Met-1–Leu-22. Residues Arg-91, Ser-204, and Lys-223 each contribute to the substrate site. Pyridoxal 5'-phosphate is bound by residues Ser-256, His-284, and Thr-334. Lys-337 is an active-site residue. Lys-337 carries the post-translational modification N6-(pyridoxal phosphate)lysine. Residues Thr-366 and Thr-367 each contribute to the pyridoxal 5'-phosphate site. Thr-452 is a binding site for substrate.

It belongs to the class-II pyridoxal-phosphate-dependent aminotransferase family. As to quaternary structure, homodimer. Interacts with MCX1. Pyridoxal 5'-phosphate serves as cofactor.

It is found in the mitochondrion matrix. It catalyses the reaction succinyl-CoA + glycine + H(+) = 5-aminolevulinate + CO2 + CoA. Its pathway is porphyrin-containing compound metabolism; protoporphyrin-IX biosynthesis; 5-aminolevulinate from glycine: step 1/1. Ihnhibited by hemin. Its function is as follows. Catalyzes the synthesis of 5-aminolevulinate (ALA) from succinyl-CoA and glycine, the first and rate-limiting step in heme biosynthesis. The protein is 5-aminolevulinate synthase, mitochondrial of Saccharomyces cerevisiae (strain ATCC 204508 / S288c) (Baker's yeast).